A 342-amino-acid polypeptide reads, in one-letter code: Putative gluconeogenesis factor (342 aa).

The tract at residues 318–342 (SEPPVAATQEIPIDGGRPRGDDAWR) is disordered. Thr-325 carries the post-translational modification Phosphothreonine. Residues 333–342 (GRPRGDDAWR) are compositionally biased toward basic and acidic residues.

This sequence belongs to the gluconeogenesis factor family. In terms of processing, phosphorylated by PknA and/or PknB.

The protein localises to the cytoplasm. Its function is as follows. Required for morphogenesis under gluconeogenic growth conditions. This Mycobacterium tuberculosis (strain CDC 1551 / Oshkosh) protein is Putative gluconeogenesis factor.